A 627-amino-acid chain; its full sequence is uncharacterized protein (627 aa).

Disordered regions lie at residues 441–466 (EAVP…QGEN) and 608–627 (DLRG…TEDR). Basic and acidic residues predominate over residues 615 to 627 (DYERGKGESTEDR).

This is an uncharacterized protein from Homo sapiens (Human).